A 278-amino-acid polypeptide reads, in one-letter code: Methyltransferase GfsG (278 aa).

S-adenosyl-L-methionine-binding positions include Gln105 and 128 to 129 (DA). The active-site Proton acceptor is Glu146. His150 provides a ligand contact to S-adenosyl-L-methionine.

This sequence belongs to the methyltransferase superfamily.

Its pathway is antibiotic biosynthesis. Methylase required for synthesis of the 16-membered macrolide antibiotics FD-891 and FD-892. In vitro uses S-adenosyl-L-methionine to methylate a number of biosynthetic intermediates in the synthesis of FD-891. The protein is Methyltransferase GfsG of Streptomyces halstedii.